The sequence spans 328 residues: UPF0421 protein SE_1574 (328 aa).

The next 4 membrane-spanning stretches (helical) occupy residues Leu-26 to Ile-46, Leu-61 to Gln-81, Ala-109 to Phe-129, and Leu-132 to Pro-152.

It belongs to the UPF0421 family.

The protein localises to the cell membrane. In Staphylococcus epidermidis (strain ATCC 12228 / FDA PCI 1200), this protein is UPF0421 protein SE_1574.